Consider the following 359-residue polypeptide: 3-dehydroquinate synthase (359 aa).

NAD(+) is bound by residues 71-76 (DGEQFK), 105-109 (GVIGD), 129-130 (TT), Lys-142, Lys-151, and 169-172 (CLQT). Glu-184, His-247, and His-264 together coordinate Zn(2+).

Belongs to the sugar phosphate cyclases superfamily. Dehydroquinate synthase family. Requires Co(2+) as cofactor. It depends on Zn(2+) as a cofactor. The cofactor is NAD(+).

The protein resides in the cytoplasm. The catalysed reaction is 7-phospho-2-dehydro-3-deoxy-D-arabino-heptonate = 3-dehydroquinate + phosphate. The protein operates within metabolic intermediate biosynthesis; chorismate biosynthesis; chorismate from D-erythrose 4-phosphate and phosphoenolpyruvate: step 2/7. In terms of biological role, catalyzes the conversion of 3-deoxy-D-arabino-heptulosonate 7-phosphate (DAHP) to dehydroquinate (DHQ). The sequence is that of 3-dehydroquinate synthase from Shewanella sp. (strain MR-4).